A 437-amino-acid chain; its full sequence is Argininosuccinate lyase (437 aa).

It belongs to the lyase 1 family. Argininosuccinate lyase subfamily.

The protein localises to the cytoplasm. The catalysed reaction is 2-(N(omega)-L-arginino)succinate = fumarate + L-arginine. It participates in amino-acid biosynthesis; L-arginine biosynthesis; L-arginine from L-ornithine and carbamoyl phosphate: step 3/3. The sequence is that of Argininosuccinate lyase from Clostridium acetobutylicum (strain ATCC 824 / DSM 792 / JCM 1419 / IAM 19013 / LMG 5710 / NBRC 13948 / NRRL B-527 / VKM B-1787 / 2291 / W).